The primary structure comprises 194 residues: Holliday junction branch migration complex subunit RuvA (194 aa).

Residues 1-63 form a domain I region; that stretch reads MFEYLYGTVE…EDTYKLIGFL (63 aa). Residues 64–142 are domain II; that stretch reads DERDRKIFEL…NLTYTEEETV (79 aa). The segment at 143 to 147 is flexible linker; sequence SMDML. The segment at 147 to 194 is domain III; that stretch reads LEDLVLALEGLGYNKKEIDKTLEKIDLNKFSSLEDAIKGILKNMRIGD.

This sequence belongs to the RuvA family. Homotetramer. Forms an RuvA(8)-RuvB(12)-Holliday junction (HJ) complex. HJ DNA is sandwiched between 2 RuvA tetramers; dsDNA enters through RuvA and exits via RuvB. An RuvB hexamer assembles on each DNA strand where it exits the tetramer. Each RuvB hexamer is contacted by two RuvA subunits (via domain III) on 2 adjacent RuvB subunits; this complex drives branch migration. In the full resolvosome a probable DNA-RuvA(4)-RuvB(12)-RuvC(2) complex forms which resolves the HJ.

The protein localises to the cytoplasm. Functionally, the RuvA-RuvB-RuvC complex processes Holliday junction (HJ) DNA during genetic recombination and DNA repair, while the RuvA-RuvB complex plays an important role in the rescue of blocked DNA replication forks via replication fork reversal (RFR). RuvA specifically binds to HJ cruciform DNA, conferring on it an open structure. The RuvB hexamer acts as an ATP-dependent pump, pulling dsDNA into and through the RuvAB complex. HJ branch migration allows RuvC to scan DNA until it finds its consensus sequence, where it cleaves and resolves the cruciform DNA. This is Holliday junction branch migration complex subunit RuvA from Fusobacterium nucleatum subsp. nucleatum (strain ATCC 25586 / DSM 15643 / BCRC 10681 / CIP 101130 / JCM 8532 / KCTC 2640 / LMG 13131 / VPI 4355).